Consider the following 437-residue polypeptide: Branched-chain amino acid transport system 3 carrier protein (437 aa).

12 helical membrane-spanning segments follow: residues 9–29 (ILAL…IIFP), 40–60 (VWLA…ITVI), 79–99 (YAGG…FAIP), 120–140 (ALFV…LYPG), 155–175 (ILAL…PIGT), 189–209 (FVNG…IVIV), 226–246 (YAIV…VSLF), 277–297 (LGSS…AVGL), 316–336 (LVII…TKLI), 342–362 (VLTA…CIGL), 369–389 (ILAP…LKAA), and 399–419 (LLHL…VATL).

This sequence belongs to the branched chain amino acid transporter family.

Its subcellular location is the cell inner membrane. Functionally, component of the LIV-III transport system for branched-chain amino acids. BraZ is specific for isoleucine and valine. The LIV-III transport system may be H(+)-coupled. In Pseudomonas aeruginosa (strain ATCC 15692 / DSM 22644 / CIP 104116 / JCM 14847 / LMG 12228 / 1C / PRS 101 / PAO1), this protein is Branched-chain amino acid transport system 3 carrier protein (braZ).